Here is a 129-residue protein sequence, read N- to C-terminus: DNA-directed RNA polymerase II subunit RPB9 (129 aa).

The Zn(2+) site is built by Cys21, Cys24, Cys43, Cys46, Cys90, Cys93, Cys118, and Cys123. The C4-type zinc-finger motif lies at Cys21–Cys46. Residues Glu86–Thr128 form a TFIIS-type zinc finger.

It belongs to the archaeal RpoM/eukaryotic RPA12/RPB9/RPC11 RNA polymerase family. Component of the RNA polymerase II (Pol II) complex consisting of 12 subunits.

The protein localises to the nucleus. Its subcellular location is the nucleolus. DNA-dependent RNA polymerase catalyzes the transcription of DNA into RNA using the four ribonucleoside triphosphates as substrates. Component of RNA polymerase II which synthesizes mRNA precursors and many functional non-coding RNAs. Pol II is the central component of the basal RNA polymerase II transcription machinery. It is composed of mobile elements that move relative to each other. RPB9 is part of the upper jaw surrounding the central large cleft and thought to grab the incoming DNA template. This chain is DNA-directed RNA polymerase II subunit RPB9, found in Drosophila melanogaster (Fruit fly).